The sequence spans 255 residues: Taurine import ATP-binding protein TauB (255 aa).

In terms of domain architecture, ABC transporter spans 2 to 229 (LQISHLYADY…RFVAGESSRS (228 aa)). ATP is bound at residue 34 to 41 (GPSGCGKT).

Belongs to the ABC transporter superfamily. Taurine importer (TC 3.A.1.17.1) family. As to quaternary structure, the complex is composed of two ATP-binding proteins (TauB), two transmembrane proteins (TauC) and a solute-binding protein (TauA).

It localises to the cell inner membrane. The enzyme catalyses taurine(out) + ATP + H2O = taurine(in) + ADP + phosphate + H(+). In terms of biological role, part of the ABC transporter complex TauABC involved in taurine import. Responsible for energy coupling to the transport system. In Escherichia coli O6:H1 (strain CFT073 / ATCC 700928 / UPEC), this protein is Taurine import ATP-binding protein TauB.